The following is a 233-amino-acid chain: MLVVAVRFSIIWDILFMSDSKLATKRKLKQEEAKGQYYRFNHPSDHRHWVKVMPGGVYATSDQEIIHTGLGSCVSACAWDIEMKVGGMNHFLLPFNNQFESQHWHPQALLSDSSRYGCYAMEVLINRLLSMGAERERLKFKLFGGAHLMGYQSLVGEKNVEFVLEYAKREKLNVVAQDLGGAQPRKLLFDPQTGQAWVKRIGFSSAHAIKQDEELYQHSIDKQIPSDDVELFQ.

The protein belongs to the CheD family.

It catalyses the reaction L-glutaminyl-[protein] + H2O = L-glutamyl-[protein] + NH4(+). Functionally, probably deamidates glutamine residues to glutamate on methyl-accepting chemotaxis receptors (MCPs), playing an important role in chemotaxis. The protein is Probable chemoreceptor glutamine deamidase CheD of Vibrio cholerae serotype O1 (strain ATCC 39315 / El Tor Inaba N16961).